We begin with the raw amino-acid sequence, 276 residues long: Phosphonoacetaldehyde hydrolase (276 aa).

D19 serves as the catalytic Nucleophile. Residues D19 and A21 each contribute to the Mg(2+) site. The Schiff-base intermediate with substrate role is filled by K60. D193 provides a ligand contact to Mg(2+).

The protein belongs to the HAD-like hydrolase superfamily. PhnX family. Homodimer. Requires Mg(2+) as cofactor.

The catalysed reaction is phosphonoacetaldehyde + H2O = acetaldehyde + phosphate + H(+). In terms of biological role, involved in phosphonate degradation. This is Phosphonoacetaldehyde hydrolase from Bordetella bronchiseptica (strain ATCC BAA-588 / NCTC 13252 / RB50) (Alcaligenes bronchisepticus).